Reading from the N-terminus, the 844-residue chain is Bifunctional abietadiene synthase, chloroplastic (844 aa).

Residues 1–46 (QSIPHFSTTLNAGSSARKRRSLYLRWGKGSNKIIACVGEGATSVPY) constitute a chloroplast transit peptide. Lys245 contacts substrate. Mg(2+) is bound by residues Asp378 and Asp380. The DXDD motif signature appears at 378 to 381 (DIDD). Lys465 contributes to the substrate binding site. Mg(2+) is bound by residues Asp597, Asp601, Asn741, Thr745, and Glu749. A DDXXD motif motif is present at residues 597 to 601 (DDLYD).

Belongs to the terpene synthase family. Tpsd subfamily. Monomer. Requires Mg(2+) as cofactor.

It localises to the plastid. It is found in the chloroplast. It carries out the reaction (2E,6E,10E)-geranylgeranyl diphosphate = (+)-copalyl diphosphate. The enzyme catalyses (+)-copalyl diphosphate = abieta-7,13-diene + diphosphate. It catalyses the reaction (+)-copalyl diphosphate = neoabietadiene + diphosphate. The catalysed reaction is (+)-copalyl diphosphate = abieta-8(14),12-diene + diphosphate. The protein operates within terpene metabolism; oleoresin biosynthesis. Its function is as follows. Involved in defensive oleoresin formation in conifers in response to insect attack or other injury. Involved in diterpene (C20) olefins biosynthesis. Bifunctional enzyme that catalyzes two sequential cyclizations of geranylgeranyl diphosphate (GGPP) to abietadiene. The copalyl diphosphate (CPP) intermediate diffuses freely between the 2 active sites in the enzyme. The polypeptide is Bifunctional abietadiene synthase, chloroplastic (LAS) (Abies balsamea (Balsam fir)).